We begin with the raw amino-acid sequence, 121 residues long: Small ribosomal subunit protein uS13 (121 aa).

The disordered stretch occupies residues 92–121; that stretch reads RKGLPMRGQRTRTNARTRKGPRRAAQALKK.

Belongs to the universal ribosomal protein uS13 family. Part of the 30S ribosomal subunit. Forms a loose heterodimer with protein S19. Forms two bridges to the 50S subunit in the 70S ribosome.

In terms of biological role, located at the top of the head of the 30S subunit, it contacts several helices of the 16S rRNA. In the 70S ribosome it contacts the 23S rRNA (bridge B1a) and protein L5 of the 50S subunit (bridge B1b), connecting the 2 subunits; these bridges are implicated in subunit movement. Contacts the tRNAs in the A and P-sites. The chain is Small ribosomal subunit protein uS13 from Burkholderia cenocepacia (strain ATCC BAA-245 / DSM 16553 / LMG 16656 / NCTC 13227 / J2315 / CF5610) (Burkholderia cepacia (strain J2315)).